The primary structure comprises 160 residues: Periplasmic nitrate reductase, electron transfer subunit (160 aa).

An N-terminal signal peptide occupies residues 1 to 25 (MKTRIIFAALALAAAMPLLVSGVFA). Heme c is bound by residues His73, Cys87, Cys90, His91, His108, Cys127, Cys130, and His131.

It belongs to the NapB family. In terms of assembly, component of the periplasmic nitrate reductase NapAB complex composed of NapA and NapB. Post-translationally, binds 2 heme C groups per subunit.

It localises to the periplasm. Functionally, electron transfer subunit of the periplasmic nitrate reductase complex NapAB. Receives electrons from the membrane-anchored tetraheme c-type NapC protein and transfers these to NapA subunit, thus allowing electron flow between membrane and periplasm. Essential for periplasmic nitrate reduction with nitrate as the terminal electron acceptor. This Azospirillum brasilense protein is Periplasmic nitrate reductase, electron transfer subunit.